We begin with the raw amino-acid sequence, 310 residues long: Methionyl-tRNA formyltransferase (310 aa).

Residue 110–113 (SLLP) coordinates (6S)-5,6,7,8-tetrahydrofolate.

The protein belongs to the Fmt family.

It catalyses the reaction L-methionyl-tRNA(fMet) + (6R)-10-formyltetrahydrofolate = N-formyl-L-methionyl-tRNA(fMet) + (6S)-5,6,7,8-tetrahydrofolate + H(+). In terms of biological role, attaches a formyl group to the free amino group of methionyl-tRNA(fMet). The formyl group appears to play a dual role in the initiator identity of N-formylmethionyl-tRNA by promoting its recognition by IF2 and preventing the misappropriation of this tRNA by the elongation apparatus. The sequence is that of Methionyl-tRNA formyltransferase from Streptomyces griseus subsp. griseus (strain JCM 4626 / CBS 651.72 / NBRC 13350 / KCC S-0626 / ISP 5235).